The following is a 366-amino-acid chain: Cytochrome c mitochondrial import factor CYC2 (366 aa).

A mitochondrion-targeting transit peptide spans 1–50; it reads MLWKNYVLSSSRITRRLHKSPRKSSFSKNFFITGCLLTVGAVSSYLTYRY. One can recognise an FAD-binding FR-type domain in the interval 63–184; sequence SYFVKYKISH…RGPFIDYEFP (122 aa).

FAD serves as cofactor.

Its subcellular location is the mitochondrion inner membrane. Functionally, redox component that participates in c-type cytochrome biogenesis in the mitochondrial intermembrane space. May play a role in the reduction of heme prior to its ligation to apocytochrome c by cytochrome c heme lyase. Has oxidoreductase activity in vitro. In Saccharomyces cerevisiae (strain ATCC 204508 / S288c) (Baker's yeast), this protein is Cytochrome c mitochondrial import factor CYC2 (CYC2).